The sequence spans 570 residues: Probable metalloreductase AIM14 (570 aa).

The next 7 helical transmembrane spans lie at 21–41, 70–90, 101–118, 142–162, 177–197, 204–224, and 230–250; these read IKYG…LALL, AIHL…HYSL, LGRL…LTLR, IITV…AIDD, FVGF…IGPM, LFYI…PIHS, and FPFL…RIVF. The region spanning 101–219 is the Ferric oxidoreductase domain; sequence LGRLSYALIP…NLVNVAFILL (119 aa). One can recognise an FAD-binding FR-type domain in the interval 250–388; the sequence is FAKSLMILNK…GGSGISFALP (139 aa). Residues 480–507 form a disordered region; sequence ISNFNSENADSNDKTPETSHSPTKENGS.

This sequence belongs to the ferric reductase (FRE) family. AIM14 subfamily. As to quaternary structure, interacts with ribosomes.

It is found in the membrane. Functionally, probable cell surface metalloreductase. May be involved in iron or copper homeostasis. In Saccharomyces cerevisiae (strain JAY291) (Baker's yeast), this protein is Probable metalloreductase AIM14 (AIM14).